Consider the following 81-residue polypeptide: ATP synthase subunit c (81 aa).

2 helical membrane-spanning segments follow: residues 5 to 25 (IAAG…IGAG) and 57 to 77 (VGLV…FVFA).

The protein belongs to the ATPase C chain family. As to quaternary structure, F-type ATPases have 2 components, F(1) - the catalytic core - and F(0) - the membrane proton channel. F(1) has five subunits: alpha(3), beta(3), gamma(1), delta(1), epsilon(1). F(0) has three main subunits: a(1), b(2) and c(10-14). The alpha and beta chains form an alternating ring which encloses part of the gamma chain. F(1) is attached to F(0) by a central stalk formed by the gamma and epsilon chains, while a peripheral stalk is formed by the delta and b chains.

The protein resides in the cell membrane. F(1)F(0) ATP synthase produces ATP from ADP in the presence of a proton or sodium gradient. F-type ATPases consist of two structural domains, F(1) containing the extramembraneous catalytic core and F(0) containing the membrane proton channel, linked together by a central stalk and a peripheral stalk. During catalysis, ATP synthesis in the catalytic domain of F(1) is coupled via a rotary mechanism of the central stalk subunits to proton translocation. Its function is as follows. Key component of the F(0) channel; it plays a direct role in translocation across the membrane. A homomeric c-ring of between 10-14 subunits forms the central stalk rotor element with the F(1) delta and epsilon subunits. The protein is ATP synthase subunit c of Mycobacterium bovis (strain ATCC BAA-935 / AF2122/97).